The sequence spans 34 residues: Cycloamanide B proprotein (34 aa).

Residues 1 to 10 (MSDINAARLP) constitute a propeptide that is removed on maturation. Residues 11-17 (SFFFPIP) constitute a cross-link (cyclopeptide (Ser-Pro)). The propeptide occupies 18–34 (CISDDIEMVLTRGESLC).

It belongs to the MSDIN fungal toxin family. Post-translationally, processed by the macrocyclase-peptidase enzyme POPB to yield a cyclic decapeptide. POPB first removes 10 residues from the N-terminus. Conformational trapping of the remaining peptide forces the enzyme to release this intermediate rather than proceed to macrocyclization. The enzyme rebinds the remaining peptide in a different conformation and catalyzes macrocyclization of the N-terminal 7 residues.

Its function is as follows. Cyclic heptapeptide that belongs to the MSDIN-like toxin family responsible for a large number of food poisoning cases and deaths. Cycloaminide B is non-toxic to mammals but shows immunosuppressive activity, probably through the inhibition of the action of interleukin-1 and interleukin-2. The chain is Cycloamanide B proprotein from Amanita phalloides (Death cap).